The primary structure comprises 549 residues: uncharacterized protein (549 aa).

This is an uncharacterized protein from Acanthamoeba polyphaga (Amoeba).